Reading from the N-terminus, the 235-residue chain is Orotidine 5'-phosphate decarboxylase (235 aa).

Residues D11, K33, 60 to 69 (DLKFHDIPNT), T119, R180, Q189, G209, and R210 contribute to the substrate site. Residue K62 is the Proton donor of the active site.

This sequence belongs to the OMP decarboxylase family. Type 1 subfamily. As to quaternary structure, homodimer.

It carries out the reaction orotidine 5'-phosphate + H(+) = UMP + CO2. Its pathway is pyrimidine metabolism; UMP biosynthesis via de novo pathway; UMP from orotate: step 2/2. Catalyzes the decarboxylation of orotidine 5'-monophosphate (OMP) to uridine 5'-monophosphate (UMP). The protein is Orotidine 5'-phosphate decarboxylase of Alkalilimnicola ehrlichii (strain ATCC BAA-1101 / DSM 17681 / MLHE-1).